The primary structure comprises 623 residues: Pyranose 2-oxidase (623 aa).

An N-terminal signal peptide occupies residues 1–28 (MSTSSSDPFFNFAKSSFRSAAAQKASAS). Positions 29–38 (SLPPLPGPDK) are excised as a propeptide. Position 167 is a tele-8alpha-FAD histidine (histidine 167). Substrate is bound by residues glutamine 448 and histidine 450. Histidine 548 serves as the catalytic Proton acceptor. Residue asparagine 593 is part of the active site.

The protein belongs to the GMC oxidoreductase family. In terms of assembly, homotetramer. It depends on FAD as a cofactor.

It is found in the periplasm. The enzyme catalyses D-glucose + O2 = 2-dehydro-D-glucose + H2O2. Functionally, catalyzes the oxidation of various aldopyranoses and disaccharides on carbon-2 to the corresponding 2-keto sugars concomitant with the reduction of O(2) to H(2)O(2). Plays an important role in lignin degradation of wood rot fungi by supplying the essential cosubstrate H(2)O(2) for the ligninolytic peroxidases, lignin peroxidase and manganese-dependent peroxidase. The sequence is that of Pyranose 2-oxidase (p2ox) from Peniophora sp. (strain SG) (White-rot fungus).